A 577-amino-acid chain; its full sequence is Proline--tRNA ligase (577 aa).

It belongs to the class-II aminoacyl-tRNA synthetase family. ProS type 1 subfamily. As to quaternary structure, homodimer.

Its subcellular location is the cytoplasm. The enzyme catalyses tRNA(Pro) + L-proline + ATP = L-prolyl-tRNA(Pro) + AMP + diphosphate. Functionally, catalyzes the attachment of proline to tRNA(Pro) in a two-step reaction: proline is first activated by ATP to form Pro-AMP and then transferred to the acceptor end of tRNA(Pro). As ProRS can inadvertently accommodate and process non-cognate amino acids such as alanine and cysteine, to avoid such errors it has two additional distinct editing activities against alanine. One activity is designated as 'pretransfer' editing and involves the tRNA(Pro)-independent hydrolysis of activated Ala-AMP. The other activity is designated 'posttransfer' editing and involves deacylation of mischarged Ala-tRNA(Pro). The misacylated Cys-tRNA(Pro) is not edited by ProRS. This chain is Proline--tRNA ligase, found in Helicobacter pylori (strain P12).